The following is a 435-amino-acid chain: MSDFSPREIVSELDRHIVGQGKAKRAVAIALRNRWRRQQLQGHMREEVLPKNILMIGPTGVGKTEISRRLARLAGAPFLKVEATKFTEVGYVGRDVEQIIRDLVEVGIGLVREQKRKDVQARAHLAAEERVLDALVGANSSSTTRDAFRKKLRAGELDEKEVEIEVQAGAQGMPMFEIPGMPGAQMGAVSLGDMLGKAFGGRTKARRVLVKDAHPLLLTEEADKLIDQEATTQEAIYAVENNGIVFLDEIDKIAQREGRSGADVSREGVQRDLLPLIEGTTVSTKHGPVKTDHILFIASGAFHVSKPSDLLPELQGRLPIRVELEALTRADFVRILTETEASLVKQSVALMGTEGVTLDISPDAVEAIADVAVEVNSTVENIGARRLQTVMERVLDELSFTAPDRSGETVSIDAAYVRERVADLAKNADLSRFIL.

Residues Val-18, 60–65 (GVGKTE), Asp-248, Glu-313, and Arg-385 contribute to the ATP site.

It belongs to the ClpX chaperone family. HslU subfamily. A double ring-shaped homohexamer of HslV is capped on each side by a ring-shaped HslU homohexamer. The assembly of the HslU/HslV complex is dependent on binding of ATP.

It localises to the cytoplasm. ATPase subunit of a proteasome-like degradation complex; this subunit has chaperone activity. The binding of ATP and its subsequent hydrolysis by HslU are essential for unfolding of protein substrates subsequently hydrolyzed by HslV. HslU recognizes the N-terminal part of its protein substrates and unfolds these before they are guided to HslV for hydrolysis. In Azorhizobium caulinodans (strain ATCC 43989 / DSM 5975 / JCM 20966 / LMG 6465 / NBRC 14845 / NCIMB 13405 / ORS 571), this protein is ATP-dependent protease ATPase subunit HslU.